The chain runs to 154 residues: Protein-export protein SecB (154 aa).

It belongs to the SecB family. As to quaternary structure, homotetramer, a dimer of dimers. One homotetramer interacts with 1 SecA dimer.

The protein resides in the cytoplasm. One of the proteins required for the normal export of preproteins out of the cell cytoplasm. It is a molecular chaperone that binds to a subset of precursor proteins, maintaining them in a translocation-competent state. It also specifically binds to its receptor SecA. The polypeptide is Protein-export protein SecB (Vibrio cholerae serotype O1 (strain ATCC 39541 / Classical Ogawa 395 / O395)).